A 95-amino-acid chain; its full sequence is Small ribosomal subunit protein bS18 (95 aa).

This sequence belongs to the bacterial ribosomal protein bS18 family. As to quaternary structure, part of the 30S ribosomal subunit. Forms a tight heterodimer with protein bS6.

In terms of biological role, binds as a heterodimer with protein bS6 to the central domain of the 16S rRNA, where it helps stabilize the platform of the 30S subunit. This chain is Small ribosomal subunit protein bS18, found in Acidiphilium cryptum (strain JF-5).